Consider the following 217-residue polypeptide: Probable transaldolase (217 aa).

The active-site Schiff-base intermediate with substrate is the Lys83.

The protein belongs to the transaldolase family. Type 3B subfamily.

Its subcellular location is the cytoplasm. The enzyme catalyses D-sedoheptulose 7-phosphate + D-glyceraldehyde 3-phosphate = D-erythrose 4-phosphate + beta-D-fructose 6-phosphate. It functions in the pathway carbohydrate degradation; pentose phosphate pathway; D-glyceraldehyde 3-phosphate and beta-D-fructose 6-phosphate from D-ribose 5-phosphate and D-xylulose 5-phosphate (non-oxidative stage): step 2/3. Its function is as follows. Transaldolase is important for the balance of metabolites in the pentose-phosphate pathway. The sequence is that of Probable transaldolase from Erythrobacter litoralis (strain HTCC2594).